The following is a 1064-amino-acid chain: MMKFRFRRQGADPQREKLKQELFAFNKTVEHGFPNQPSALAFDPELRIMAIGTRSGAVKIYGAPGVEFTGLHRDAATVTQMHFLTGQGRLLSLLDDSSLHLWEIVHHNGCAHLEEALSFQLPSRPGFDGASAPLSLTRVTVVLLVAASDIAALGTEGSSVFFLDVTTLTLLEGQTLAPGEVLRSVPDDYRCGKALGPVESLQGHLRDPTKILIGYSRGLLVIWNQASQCVDHIFLGNQQLESLCWGRDSSTVVSSHSDGSYAVWSVDAGSFPTLQPTVATTPYGPFPCKAINKILWRNCESGGHFIIFSGGMPRASYGDRHCVSVLRAETLVTLDFTSRIIDFFTVHSTRPEDEFDDPQALAVLLEEELVVLDLQTPGWPAVPAPYLAPLHSSAITCSAHVASVPAKLWARIVSAGEQQSPQPVSSALSWPITGGRNLAQEPSQRGLLLTGHEDGTVRFWDASGVALRPLYKLSTAGLFQTDCEHADSLAQAAEDDWPPFRKVGCFDPYSDDPRLGVQKVALCKYTAQMVVAGTAGQVLVLELSDVPVEQAVSVAIIDLLQDREGFTWKGHERLSPRTGPLPWPAGFQPRVLVQCLPPAAVTAVTLHTEWSLVAFGTSHGFGLFDYQRKSPVLARCTLHPNDSLAMEGPLSRVKSLKKSLRQSFRRIRKSRVSGKKRAANASSKLQEANAQLAEQACPHDVEMTPVQRRIEPRSADDSLSGVVRCLYFADTFLRDGAHHGPTMWAGTNSGSVFAYALEVPAAAVGGEKRPEQAVEAVLGKEVQLMHRAPVVAIAVLDGRGRPLPEPYEASRDLAQAPDMQGGHAVLIASEEQFKVFTLPKVSAKTKFKLTAHEGCRVRKVALATFASVACEDYAETCLACLTNLGDVHVFSVPGLRPQVHYSCIRKEDISGIASCVFTRHGQGFYLISPSEFERFSLSARNITEPLCSLDINWPRDATQASYRIRESPKLSQANGTPSILLAPQSLDGSPDPAHSMGPDTPEPPEAALSPMSIDSATSADTTLDTTGDVTVEDVKDFLGSSEESEKNLRNLAEDEAHACAILIK.

WD repeat units lie at residues 38 to 71, 78 to 119, 139 to 176, 200 to 234, 240 to 272, 290 to 332, 340 to 374, 396 to 474, 518 to 593, 602 to 663, 723 to 783, 792 to 844, 849 to 902, and 916 to 939; these read SALA…FTGL, VTQM…ALSF, VTVV…GQTL, SLQG…DHIF, LESL…GSFP, AINK…ETLV, IIDF…VLDL, TCSA…YKLS, QKVA…RVLV, TAVT…LRQS, VRCL…KEVQ, AIAV…VSAK, LTAH…VHYS, and VFTR…SLSA. S663 bears the Phosphoserine mark. Position 958 is a phosphothreonine (T958). The disordered stretch occupies residues 966–1010; sequence ESPKLSQANGTPSILLAPQSLDGSPDPAHSMGPDTPEPPEAALSP. 2 positions are modified to phosphoserine: S967 and S985.

This sequence belongs to the WD repeat L(2)GL family. Associated with nonmuscle myosin II heavy chain. Interacts with PRKCI/aPKC, PARD6B/Par-6 and PARD6A. Interacts with STX4A. Interacts with RAB10 (GDP-bound form); the interaction is direct and promotes RAB10 association with membranes and activation through competition with the Rab inhibitor GDI1. Interacts with DCAF1. Post-translationally, phosphorylated at least at Ser-663 by PRKCI. Expressed in brain, kidney, and muscle but is barely seen in heart and placenta. Down-regulated or lost in all cell lines and in most of the tumor samples analyzed. Loss was associated with advanced stage of the disease.

The protein resides in the early endosome membrane. The protein localises to the golgi apparatus. Its subcellular location is the trans-Golgi network membrane. It localises to the golgi apparatus membrane. It is found in the cell projection. The protein resides in the axon. The protein localises to the cytoplasm. Its subcellular location is the cytoskeleton. Cortical cytoskeleton protein found in a complex involved in maintaining cell polarity and epithelial integrity. Involved in the regulation of mitotic spindle orientation, proliferation, differentiation and tissue organization of neuroepithelial cells. Involved in axonogenesis through RAB10 activation thereby regulating vesicular membrane trafficking toward the axonal plasma membrane. The polypeptide is Lethal(2) giant larvae protein homolog 1 (LLGL1) (Homo sapiens (Human)).